A 207-amino-acid polypeptide reads, in one-letter code: uncharacterized protein (207 aa).

Disordered stretches follow at residues 1–81 (MNPT…GNTR) and 140–169 (TSQS…PPKK). Over residues 21 to 40 (FEQTNSSASLTQKNSSSETE) the composition is skewed to polar residues. Basic residues predominate over residues 58–70 (PTKRGSGRGRGRS). Over residues 140 to 152 (TSQSIDAQPTPSQ) the composition is skewed to polar residues. Residues 156–165 (AHHEPHEKRG) are compositionally biased toward basic and acidic residues.

The protein resides in the nucleus. Its subcellular location is the nucleolus. This is an uncharacterized protein from Schizosaccharomyces pombe (strain 972 / ATCC 24843) (Fission yeast).